The primary structure comprises 267 residues: Thyroxine 5-deiodinase (267 aa).

Residues 1–15 are Cytoplasmic-facing; that stretch reads MHDSGGVQMARALKH. The helical; Signal-anchor for type II membrane protein transmembrane segment at 16-36 threads the bilayer; the sequence is AALCLMLLPRFLLAAVMLWLL. At 37–267 the chain is on the extracellular side; the sequence is DFLCIRKKVL…VNSQTAVLHV (231 aa). U131 is an active-site residue. U131 is a non-standard amino acid (selenocysteine).

It belongs to the iodothyronine deiodinase family. Monomer. Homodimer. May undergo minor heretodimerization with DIO1 and DIO2.

It is found in the cell membrane. The protein localises to the endosome membrane. The catalysed reaction is 3,3',5'-triiodo-L-thyronine + iodide + A + H(+) = L-thyroxine + AH2. It carries out the reaction 3,3'-diiodo-L-thyronine + iodide + A + H(+) = 3,3',5-triiodo-L-thyronine + AH2. The enzyme catalyses 3-iodo-L-thyronine + iodide + A + H(+) = 3,5-diiodo-L-thyronine + AH2. It catalyses the reaction L-thyronine + iodide + A + H(+) = 3-iodo-L-thyronine + AH2. The catalysed reaction is 3',5'-diiodo-L-thyronine + iodide + A + H(+) = 3,3',5'-triiodo-L-thyronine + AH2. It carries out the reaction 3'-iodo-L-thyronine + iodide + A + H(+) = 3,3'-diiodo-L-thyronine + AH2. The enzyme catalyses 3,3',5'-triiodothyronamine + iodide + A + H(+) = 3,3',5,5'-tetraiodothyronamine + AH2. It catalyses the reaction 3',5'-diiodothyronamine + iodide + A + H(+) = 3,3',5'-triiodothyronamine + AH2. The catalysed reaction is 3,3'-diiodothyronamine + iodide + A + H(+) = 3,3',5-triiodothyronamine + AH2. It carries out the reaction 3-iodothyronamine + iodide + A + H(+) = 3,5-diiodothyronamine + AH2. The enzyme catalyses 3'-iodothyronamine + iodide + A + H(+) = 3,3'-diiodothyronamine + AH2. It catalyses the reaction thyronamine + iodide + A + H(+) = 3-iodothyronamine + AH2. Plays a crucial role in the metabolism of thyroid hormones (TH) and has specific roles in TH activation and inactivation by deiodination. Catalyzes the deiodination of L-thyroxine (T4) to 3,3',5'-triiodothyronine (rT3), 3,5,3'-triiodothyronine (T3) to 3,3'-diiodothyronine (3,3'-T2), 3,5-diiodothyronine (3,5-T2) to 3-monoiodothyronine (3-T1), rT3 to 3',5'-diiodothyronine (3',5'-T2) and 3,3'-T2 to 3'-monoiodothyronine (3'-T1) via inner-ring deiodination (IRD). Catalyzes the deiodination of 3-T1 to L-thyronine (T0) via outer-ring deiodination (ORD). Catalyzes the tyrosyl ring deiodinations of 3,3',5,5'-tetraiodothyronamine, 3,3',5'-triiodothyronamine, 3,5,3'-triiodothyronamine, 3,5-diiodothyronamine, 3,3'-diiodothyronamine and 3-iodothyronamine. The protein is Thyroxine 5-deiodinase (dio3) of Sparus aurata (Gilthead sea bream).